Reading from the N-terminus, the 274-residue chain is 3-methyl-2-oxobutanoate hydroxymethyltransferase (274 aa).

Mg(2+)-binding residues include Asp-46 and Asp-85. Residues Asp-46–Ser-47, Asp-85, and Lys-114 each bind 3-methyl-2-oxobutanoate. Glu-116 provides a ligand contact to Mg(2+). The active-site Proton acceptor is Glu-183.

This sequence belongs to the PanB family. As to quaternary structure, homodecamer; pentamer of dimers. It depends on Mg(2+) as a cofactor.

It is found in the cytoplasm. It carries out the reaction 3-methyl-2-oxobutanoate + (6R)-5,10-methylene-5,6,7,8-tetrahydrofolate + H2O = 2-dehydropantoate + (6S)-5,6,7,8-tetrahydrofolate. The protein operates within cofactor biosynthesis; coenzyme A biosynthesis. Its function is as follows. Catalyzes the reversible reaction in which hydroxymethyl group from 5,10-methylenetetrahydrofolate is transferred onto alpha-ketoisovalerate to form ketopantoate. In Aeropyrum pernix (strain ATCC 700893 / DSM 11879 / JCM 9820 / NBRC 100138 / K1), this protein is 3-methyl-2-oxobutanoate hydroxymethyltransferase.